We begin with the raw amino-acid sequence, 537 residues long: Sodium/hydrogen exchanger 9B2 (537 aa).

Residues 1 to 10 (MGDEDKRITY) show a composition bias toward basic and acidic residues. A disordered region spans residues 1-28 (MGDEDKRITYEDSEPSTGMNYTPSMHQE). The Cytoplasmic segment spans residues 1 to 86 (MGDEDKRITY…ACPPHGLLDR (86 aa)). Residues 15–27 (PSTGMNYTPSMHQ) are compositionally biased toward polar residues. S49 bears the Phosphoserine mark. The helical transmembrane segment at 87 to 104 (VITNVTIIVLLWAVVWSI) threads the bilayer. Over 105 to 113 (TGSECLPGG) the chain is Extracellular. The helical transmembrane segment at 114–133 (NLFGIIILFYCAIIGGKLLG) threads the bilayer. Topologically, residues 134 to 144 (LIKLPTLPPLP) are cytoplasmic. A helical transmembrane segment spans residues 145 to 161 (SLLGMLLAGFLIRNIPV). Residues 162-171 (INDNVQIKHK) lie on the Extracellular side of the membrane. A helical transmembrane segment spans residues 172-189 (WSSSLRSIALSIILVRAG). Residues 190–200 (LGLDSKALKKL) lie on the Cytoplasmic side of the membrane. The chain crosses the membrane as a helical span at residues 201–227 (KGVCVRLSMGPCIVEACTSALLAHYLL). Residues 228–233 (GLPWQW) lie on the Extracellular side of the membrane. A helical transmembrane segment spans residues 234–242 (GFILGFVLG). Residues 243-270 (AVSPAVVVPSMLLLQGGGYGVEKGVPTL) are Cytoplasmic-facing. V244, G275, D278, and D279 together coordinate Na(+). Residues 271 to 290 (LMAAGSFDDILAITGFNTCL) form a helical membrane-spanning segment. Residues 291-300 (GIAFSTGSTV) lie on the Extracellular side of the membrane. A helical transmembrane segment spans residues 301–324 (FNVLRGVLEVVIGVATGSVLGFFI). The Cytoplasmic segment spans residues 325 to 339 (QYFPSRDQDKLVCKR). Residues 340 to 357 (TFLVLGLSVLAVFSSVHF) form a helical membrane-spanning segment. Residues 358 to 361 (GFPG) are Extracellular-facing. Residues 362 to 373 (SGGLCTLVMAFL) form a helical membrane-spanning segment. The Cytoplasmic segment spans residues 374–390 (AGMGWTSEKAEVEKIIA). A helical transmembrane segment spans residues 391-411 (VAWDIFQPLLFGLIGAEVSIA). Residues 412–417 (SLRPET) lie on the Extracellular side of the membrane. The chain crosses the membrane as a helical span at residues 418–440 (VGLCVATVGIAVLIRILTTFLMV). Residues 441–461 (CFAGFNLKEKIFISFAWLPKA) are Cytoplasmic-facing. Residues 462 to 473 (TVQAAIGSVALD) form a helical membrane-spanning segment. Over 474–486 (TARSHGEKQLEDY) the chain is Extracellular. The chain crosses the membrane as a helical span at residues 487–509 (GMDVLTVAFLSILITAPIGSLLI). Residues 510–537 (GLLGPRLLQKVEHQNKDEEVQGETSVQV) lie on the Cytoplasmic side of the membrane.

This sequence belongs to the monovalent cation:proton antiporter 1 (CPA1) transporter (TC 2.A.36) family. As to quaternary structure, homodimer. Dimerization is essential for SLC9B2 activity. Lipids seem to play a role in the stabilization of the dimerization subdomain. As to expression, widely expressed. High levels detected in the distal tubules of the kidney nephron. Detected in red blood cells (at protein level).

It is found in the cell membrane. Its subcellular location is the mitochondrion membrane. The protein localises to the endosome membrane. The protein resides in the recycling endosome membrane. It localises to the cytoplasmic vesicle. It is found in the secretory vesicle. Its subcellular location is the synaptic vesicle membrane. The protein localises to the cell projection. The protein resides in the cilium. It localises to the flagellum membrane. It is found in the basolateral cell membrane. Its subcellular location is the apical cell membrane. The catalysed reaction is Li(+)(out) + H(+)(in) = Li(+)(in) + H(+)(out). It carries out the reaction Li(+)(in) + Na(+)(out) = Li(+)(out) + Na(+)(in). It catalyses the reaction Na(+)(in) + H(+)(out) = Na(+)(out) + H(+)(in). Allosterically inhibited by the N-terminal domain. Inhibited by phloretin. Functionally, electroneutral Na(+) Li(+)/H(+) antiporter that extrudes Na(+) or Li(+) in exchange for external protons across the membrane. Uses the proton gradient/membrane potential to extrude sodium. Contributes to the regulation of intracellular pH and sodium homeostasis. Also able to mediate Na(+)/Li(+) antiporter activity in kidney. May play a physiological role in renal tubular function and blood pressure homeostasis. Plays an important role for insulin secretion and clathrin-mediated endocytosis in beta-cells. Involved in sperm motility and fertility. It is controversial whether SLC9B2 plays a role in osteoclast differentiation or not. This is Sodium/hydrogen exchanger 9B2 from Homo sapiens (Human).